Here is a 1120-residue protein sequence, read N- to C-terminus: ELKS/Rab6-interacting/CAST family member 1 (1120 aa).

A disordered region spans residues 1–54 (MYGSARSVGKVEPSSQSPGRSPRLPRSPRLGHRRTNSTGGSSGNSVGGGSGKTL). Lys10 bears the N6-acetyllysine mark. Low complexity predominate over residues 13–28 (PSSQSPGRSPRLPRSP). Residues Ser17, Ser21, and Ser37 each carry the phosphoserine modification. Thr38 carries the phosphothreonine modification. The segment covering 40 to 51 (GSSGNSVGGGSG) has biased composition (gly residues). Phosphoserine is present on residues Ser55, Ser75, Ser94, Ser824, Leu965, and Ser1009. Positions 144-992 (RQARDNTIMD…RMKLMADNYE (849 aa)) form a coiled coil. Basic and acidic residues predominate over residues 801–824 (KHKEQVEKKKSAQMLEEARRREDS). The disordered stretch occupies residues 801-840 (KHKEQVEKKKSAQMLEEARRREDSLSDSSQQLQDSLRKKD). Residue Thr1050 is modified to Phosphothreonine. The FIP-RBD domain occupies 1050–1112 (TPPASYNADG…DHCPDILEQV (63 aa)). Residues 1060–1104 (EQAAWENELQQMTQEQLQNELEKVEGDNAELQEFANTILQQIADH) are a coiled coil.

Interacts with the GTB-bound forms of RAB6A isoform 1 and isoform 2 and with RAB6B. The interaction was strongest with RAB6B, followed by RAB6A isoform 2 and weakest with RAB6A isoform 1. Part of a complex with CHUK, IKBKB and IKBKG. Interacts with CHUK, IKBKB and IKBKG. The interaction with IKBKG is independent of CHUK and IKBKB. Interacts with NFKBIA. Isoform 2 interacts through its C-terminus with the PDZ domains of RIMS1 and RIMS2. Interacts with ERC2/CAST1. Interacts with SDCCAG8. Part of a cortical microtubule stabilization complex (CMSC) composed of KANK1, PPFIA1, PPFIBP1, ERC1/ELKS, PHLDB2/LL5beta, CLASPs, KIF21A and possibly additional interactors; within CMSCs KANK1 and PHLDB2/LL5beta appear to be the core components for targeting of microtubule-binding proteins KIF21A and CLASPs, whereas PPFIA1, PPFIBP1 and ERC1/ELKS serve as scaffolds for protein clustering. In terms of tissue distribution, widely expressed.

It is found in the cytoplasm. The protein resides in the cytoskeleton. The protein localises to the microtubule organizing center. It localises to the centrosome. Its subcellular location is the membrane. It is found in the golgi apparatus membrane. The protein resides in the presynaptic active zone. The protein localises to the cell projection. It localises to the podosome. Functionally, regulatory subunit of the IKK complex. Probably recruits IkappaBalpha/NFKBIA to the complex. May be involved in the organization of the cytomatrix at the nerve terminals active zone (CAZ) which regulates neurotransmitter release. May be involved in vesicle trafficking at the CAZ. May be involved in Rab-6 regulated endosomes to Golgi transport. In Mus musculus (Mouse), this protein is ELKS/Rab6-interacting/CAST family member 1.